A 586-amino-acid polypeptide reads, in one-letter code: Arginine--tRNA ligase (586 aa).

A 'HIGH' region motif is present at residues 131 to 141 (ANPTGPLHVGH).

Belongs to the class-I aminoacyl-tRNA synthetase family. As to quaternary structure, monomer.

The protein localises to the cytoplasm. It catalyses the reaction tRNA(Arg) + L-arginine + ATP = L-arginyl-tRNA(Arg) + AMP + diphosphate. The chain is Arginine--tRNA ligase from Nitrosomonas eutropha (strain DSM 101675 / C91 / Nm57).